The sequence spans 239 residues: MAVPRQRAAGGLCGDGHHRFWLGPGGGALLAGSGRCRGGGLVILLDVPASMLHGGLNFRQVRWRAIGAILPGMAVGALIGLWLMGQLDKRWPLFLLGLYITWVGWRTLRHGQQAARALPGWTHHAGSGLVGVLEVMFATAGPMVIALLQRRLREVAEIRATVPVVMVVAASIAIAVLFGAGQIDRAHTFERWLVALPIAFMGVVLGNRLARHIPPPAMRRAMAVLLIASGLSLTQHLWR.

A run of 4 helical transmembrane segments spans residues 65–85 (AIGA…WLMG), 128–148 (GLVG…IALL), 160–180 (ATVP…LFGA), and 186–206 (AHTF…VVLG).

Belongs to the 4-toluene sulfonate uptake permease (TSUP) (TC 2.A.102) family. Part of a two-component transport system composed of TsaT and TsaS.

Its subcellular location is the cell inner membrane. Involved in the uptake of p-toluenesulphonate (TSA). This Comamonas testosteroni (Pseudomonas testosteroni) protein is Probable inner membrane transporter protein TsaS (tsaS).